Reading from the N-terminus, the 124-residue chain is Fluoride-specific ion channel FluC (124 aa).

Helical transmembrane passes span V3–L23, I34–I54, L68–F88, and A100–I120. Na(+)-binding residues include G75 and T78.

Belongs to the fluoride channel Fluc/FEX (TC 1.A.43) family.

It is found in the cell inner membrane. The enzyme catalyses fluoride(in) = fluoride(out). With respect to regulation, na(+) is not transported, but it plays an essential structural role and its presence is essential for fluoride channel function. Functionally, fluoride-specific ion channel. Important for reducing fluoride concentration in the cell, thus reducing its toxicity. This Coxiella burnetii (strain CbuK_Q154) (Coxiella burnetii (strain Q154)) protein is Fluoride-specific ion channel FluC.